The following is a 976-amino-acid chain: Mast/stem cell growth factor receptor kita (976 aa).

The signal sequence occupies residues 1–21 (MEYHCVLFTVLLQLIIQPGRS). The Extracellular segment spans residues 22–515 (RPTITPEGPR…NTVPHELFTP (494 aa)). Ig-like C2-type domains follow at residues 23–105 (PTIT…VYVK), 100–199 (IYVY…LTVR), 206–301 (PPIT…VWVN), 308–402 (INIT…FEVH), and 399–504 (FEVH…FSIS). N-linked (GlcNAc...) asparagine glycosylation is found at N39 and N47. 4 disulfides stabilise this stretch: C44-C89, C131-C180, C146-C177, and C228-C285. N-linked (GlcNAc...) asparagine glycosylation is found at N282, N309, N315, N352, N449, and N477. C422 and C488 are disulfide-bonded. A helical transmembrane segment spans residues 516–536 (LLIGFVAAAVILVLILIVLTY). Over 537 to 976 (KYMQKPKYQI…DRSSPSHPVV (440 aa)) the chain is Cytoplasmic. Y559 is a binding site for Mg(2+). Phosphotyrosine; by autocatalysis occurs at positions 559 and 561. The region spanning 580-922 (LRFGKTLGSG…ISDSTKHIYL (343 aa)) is the Protein kinase domain. Residues 587-594 (GSGAFGKV), K614, and 662-668 (EYCCFGD) each bind ATP. 2 positions are modified to phosphotyrosine; by autocatalysis: Y691 and Y707. The active-site Proton acceptor is the D777. Position 781 (R781) interacts with ATP. Residues N782 and D795 each contribute to the Mg(2+) site. Phosphotyrosine; by autocatalysis is present on residues Y808 and Y921. Residues 929–976 (PAAPGPREESSSHVHRLNSVGSHSTATQPLLSSNDVFLDRSSPSHPVV) form a disordered region. Polar residues predominate over residues 947-976 (SVGSHSTATQPLLSSNDVFLDRSSPSHPVV).

Belongs to the protein kinase superfamily. Tyr protein kinase family. CSF-1/PDGF receptor subfamily. In terms of processing, ubiquitinated. Rapidly ubiquitinated after autophosphorylation induced by kitlg/scf binding, leading to internalization and degradation. Post-translationally, autophosphorylated on tyrosine residues. Phosphorylated tyrosine residues are important for interaction with specific binding partners. As to expression, expressed in cells of the neural crest-melanocyte lineage. In the embryo, also expressed in mesodermal cells that give rise to hematopoietic precursors, notochord, neural crest-derived cells of the branchial arches, pineal gland, retina and mechanoreceptive sensory cells of lateral line neuromasts. Not detected in primordial germ cells or larval gut.

It is found in the cell membrane. It catalyses the reaction L-tyrosyl-[protein] + ATP = O-phospho-L-tyrosyl-[protein] + ADP + H(+). In terms of biological role, tyrosine-protein kinase that acts as a cell-surface receptor for the cytokine kitlg/scf and plays a role in the regulation of cell survival and proliferation, hematopoiesis, stem cell maintenance, gametogenesis, and in mast cell development, migration and function. Required for the migration of cells in the melanocyte lineage and the survival of embryonic melanocytes. Required for the differentiation of some, but not all, melanocytes. Not essential for hematopoiesis or primordial germ cell development. The sequence is that of Mast/stem cell growth factor receptor kita (kita) from Danio rerio (Zebrafish).